A 399-amino-acid chain; its full sequence is Elongation factor Tu (399 aa).

Residues 10 to 207 (KPHMNVGTIG…AMDTYFPDPV (198 aa)) form the tr-type G domain. The G1 stretch occupies residues 19–26 (GQIDHGKT). 19 to 26 (GQIDHGKT) lines the GTP pocket. Mg(2+) is bound at residue Thr-26. The tract at residues 60–64 (GITIN) is G2. The G3 stretch occupies residues 81 to 84 (DCPG). GTP-binding positions include 81-85 (DCPGH) and 136-139 (NKVD). Residues 136–139 (NKVD) form a G4 region. The tract at residues 173–175 (SAL) is G5.

The protein belongs to the TRAFAC class translation factor GTPase superfamily. Classic translation factor GTPase family. EF-Tu/EF-1A subfamily. Monomer.

Its subcellular location is the cytoplasm. It carries out the reaction GTP + H2O = GDP + phosphate + H(+). GTP hydrolase that promotes the GTP-dependent binding of aminoacyl-tRNA to the A-site of ribosomes during protein biosynthesis. The chain is Elongation factor Tu from Fervidobacterium islandicum.